Reading from the N-terminus, the 493-residue chain is Galactose-1-phosphate uridylyltransferase 2 (493 aa).

This sequence belongs to the galactose-1-phosphate uridylyltransferase type 2 family.

It is found in the cytoplasm. The enzyme catalyses alpha-D-galactose 1-phosphate + UDP-alpha-D-glucose = alpha-D-glucose 1-phosphate + UDP-alpha-D-galactose. It participates in carbohydrate metabolism; galactose metabolism. The chain is Galactose-1-phosphate uridylyltransferase 2 (galT2) from Streptococcus pneumoniae (strain ATCC BAA-255 / R6).